Here is a 215-residue protein sequence, read N- to C-terminus: Late embryogenesis abundant protein 14 (215 aa).

Disordered regions lie at residues 1 to 129 (MASQ…GQTG) and 190 to 215 (SGDN…SDYQ). 4 stretches are compositionally biased toward basic and acidic residues: residues 13–24 (GETKARAEEKTG), 32–41 (EKAREAKDTA), 54–81 (GAKE…KDAA), and 88–111 (AMDK…DRAA). Residues 192–215 (DNKNNAAAGKDTSTYKPGTGSDYQ) show a composition bias toward polar residues.

The protein belongs to the LEA type 4 family. As to expression, expressed in the shoot apex and leaves. Expressed in dry seeds. Expressed in roots and leaves.

It is found in the nucleus. The polypeptide is Late embryogenesis abundant protein 14 (Oryza sativa subsp. japonica (Rice)).